The chain runs to 413 residues: Metacaspase-1A (413 aa).

Positions methionine 1–glycine 104 are disordered. Over residues serine 36–histidine 47 the composition is skewed to pro residues. Over residues glycine 49 to glycine 58 the composition is skewed to low complexity. The segment covering glycine 75 to histidine 85 has biased composition (polar residues). Residues histidine 204 and cysteine 260 contribute to the active site.

Belongs to the peptidase C14B family.

Involved in cell death (apoptosis). Required for the apoptotic-like loss of membrane phospholipid asymmetry at stationary phase and facilitates growth under conditions of endoplasmic reticulum stress. This is Metacaspase-1A (casA) from Aspergillus fumigatus (strain CBS 144.89 / FGSC A1163 / CEA10) (Neosartorya fumigata).